Here is a 150-residue protein sequence, read N- to C-terminus: Histone H2B.2 (150 aa).

Basic and acidic residues-rich tracts occupy residues 1-21 and 33-49; these read MAPKAEKKPAEKKPAEEKAGE and EKRLPASKGEKGGEGKK. The tract at residues 1–58 is disordered; that stretch reads MAPKAEKKPAEKKPAEEKAGEKAPAAGKKPKAEKRLPASKGEKGGEGKKERGRKKAKK. Residues Lys7 and Lys34 each carry the N6-acetyllysine modification. Lys146 participates in a covalent cross-link: Glycyl lysine isopeptide (Lys-Gly) (interchain with G-Cter in ubiquitin).

The protein belongs to the histone H2B family. The nucleosome is a histone octamer containing two molecules each of H2A, H2B, H3 and H4 assembled in one H3-H4 heterotetramer and two H2A-H2B heterodimers. The octamer wraps approximately 147 bp of DNA. Can be acetylated to form H2BK6ac and H2BK33ac. Post-translationally, monoubiquitinated by BRE1 to form H2BK143ub1 and deubiquitinated by UBP26. Required for heterochromatic histone H3 di- and trimethylation at H3K4me. May give a specific tag for epigenetic transcriptional activation.

It localises to the nucleus. The protein resides in the chromosome. Functionally, core component of nucleosome. Nucleosomes wrap and compact DNA into chromatin, limiting DNA accessibility to the cellular machineries which require DNA as a template. Histones thereby play a central role in transcription regulation, DNA repair, DNA replication and chromosomal stability. DNA accessibility is regulated via a complex set of post-translational modifications of histones, also called histone code, and nucleosome remodeling. The protein is Histone H2B.2 (H2B.2) of Oryza sativa subsp. indica (Rice).